The following is a 141-amino-acid chain: Large ribosomal subunit protein uL22 (141 aa).

The segment at 110-141 is disordered; sequence EEKKTVAKKTTTTKAPAKKTTSTKKATVKKES. Positions 117–134 are enriched in low complexity; that stretch reads KKTTTTKAPAKKTTSTKK.

This sequence belongs to the universal ribosomal protein uL22 family. Part of the 50S ribosomal subunit.

Its function is as follows. This protein binds specifically to 23S rRNA; its binding is stimulated by other ribosomal proteins, e.g. L4, L17, and L20. It is important during the early stages of 50S assembly. It makes multiple contacts with different domains of the 23S rRNA in the assembled 50S subunit and ribosome. The globular domain of the protein is located near the polypeptide exit tunnel on the outside of the subunit, while an extended beta-hairpin is found that lines the wall of the exit tunnel in the center of the 70S ribosome. The protein is Large ribosomal subunit protein uL22 of Campylobacter jejuni (strain RM1221).